The primary structure comprises 230 residues: Orotidine 5'-phosphate decarboxylase (230 aa).

Residues D11, K34, 61–70 (DLKLHDIPNT), T117, R179, Q188, G208, and R209 contribute to the substrate site. K63 (proton donor) is an active-site residue.

It belongs to the OMP decarboxylase family. Type 1 subfamily. As to quaternary structure, homodimer.

It carries out the reaction orotidine 5'-phosphate + H(+) = UMP + CO2. Its pathway is pyrimidine metabolism; UMP biosynthesis via de novo pathway; UMP from orotate: step 2/2. Its function is as follows. Catalyzes the decarboxylation of orotidine 5'-monophosphate (OMP) to uridine 5'-monophosphate (UMP). The protein is Orotidine 5'-phosphate decarboxylase of Streptococcus gordonii (strain Challis / ATCC 35105 / BCRC 15272 / CH1 / DL1 / V288).